The sequence spans 842 residues: Glucans biosynthesis glucosyltransferase H (842 aa).

Transmembrane regions (helical) follow at residues 140–160 (ILLL…KTIL), 194–214 (ILIL…TALM), 513–533 (VFLT…FLAL), 570–590 (LFAS…MLIW), 615–635 (VLLA…AFLG), 656–676 (FMRH…MAWL), and 680–700 (FLFW…VSVV).

This sequence belongs to the glycosyltransferase 2 family. OpgH subfamily.

Its subcellular location is the cell inner membrane. The protein operates within glycan metabolism; osmoregulated periplasmic glucan (OPG) biosynthesis. Involved in the biosynthesis of osmoregulated periplasmic glucans (OPGs). The polypeptide is Glucans biosynthesis glucosyltransferase H (Citrobacter koseri (strain ATCC BAA-895 / CDC 4225-83 / SGSC4696)).